A 335-amino-acid chain; its full sequence is Expansin-like protein 3 (335 aa).

Residues 1–20 (MKFNTIFLVLSIVKFILISA) form the signal peptide. Over 21–314 (QSCPFSQSII…LNENENIESN (294 aa)) the chain is Extracellular. Positions 43–143 (AGNCGFEKLN…VKVPCEVSGN (101 aa)) constitute an Expansin-like EG45 domain. 2 disulfide bridges follow: cysteine 46–cysteine 76 and cysteine 79–cysteine 138. An N-linked (GlcNAc...) asparagine glycan is attached at asparagine 87. Positions 247–276 (YKPQTFNSQQTSNNQNSNTQTPTKQPSPNS) are disordered. Over residues 249–272 (PQTFNSQQTSNNQNSNTQTPTKQP) the composition is skewed to low complexity. The chain crosses the membrane as a helical span at residues 315–335 (SLKLLPNFLLLILIILLNINF).

Belongs to the expansin family. Expansin A subfamily.

It is found in the membrane. Its function is as follows. May serve to lubricate the movement of the cellulose microfibrils during cell growth and wall extension and/or may serve to maintain the fluid state of the slug cell wall. This chain is Expansin-like protein 3 (expl3), found in Dictyostelium discoideum (Social amoeba).